The chain runs to 65 residues: Large ribosomal subunit protein bL35 (65 aa).

It belongs to the bacterial ribosomal protein bL35 family.

The chain is Large ribosomal subunit protein bL35 from Synechococcus sp. (strain CC9605).